The chain runs to 329 residues: Biotin synthase (329 aa).

The Radical SAM core domain occupies 48–278; it reads FVGDKVFLCS…TKRISICGGR (231 aa). Residues C66, C70, and C73 each contribute to the [4Fe-4S] cluster site. 2 residues coordinate [2Fe-2S] cluster: S143 and C203.

This sequence belongs to the radical SAM superfamily. Biotin synthase family. In terms of assembly, homodimer. [4Fe-4S] cluster is required as a cofactor. It depends on [2Fe-2S] cluster as a cofactor.

It catalyses the reaction (4R,5S)-dethiobiotin + (sulfur carrier)-SH + 2 reduced [2Fe-2S]-[ferredoxin] + 2 S-adenosyl-L-methionine = (sulfur carrier)-H + biotin + 2 5'-deoxyadenosine + 2 L-methionine + 2 oxidized [2Fe-2S]-[ferredoxin]. The protein operates within cofactor biosynthesis; biotin biosynthesis; biotin from 7,8-diaminononanoate: step 2/2. Functionally, catalyzes the conversion of dethiobiotin (DTB) to biotin by the insertion of a sulfur atom into dethiobiotin via a radical-based mechanism. This Geotalea daltonii (strain DSM 22248 / JCM 15807 / FRC-32) (Geobacter daltonii) protein is Biotin synthase.